A 113-amino-acid polypeptide reads, in one-letter code: GGPGCGNGNNGNGNYGYGNGNGNGNGYGNSNGNGNGCGPDGKGPGCNSVSSAGTLSSYGQVVGSNVYSANGCGPDGKGPGCQVKPLSLPKYFFRKSSQYPRRKNCSPNEIGCN.

In terms of tissue distribution, component of the organic matrix of calcified shell layers.

This is Gigasin-5 from Magallana gigas (Pacific oyster).